The sequence spans 180 residues: tRNA (cytidine(56)-2'-O)-methyltransferase (180 aa).

S-adenosyl-L-methionine is bound by residues Leu-84 and 112-116 (GAEKV).

It belongs to the aTrm56 family. In terms of assembly, homodimer.

The protein resides in the cytoplasm. The catalysed reaction is cytidine(56) in tRNA + S-adenosyl-L-methionine = 2'-O-methylcytidine(56) in tRNA + S-adenosyl-L-homocysteine + H(+). Functionally, specifically catalyzes the AdoMet-dependent 2'-O-ribose methylation of cytidine at position 56 in tRNAs. This chain is tRNA (cytidine(56)-2'-O)-methyltransferase, found in Natronomonas pharaonis (strain ATCC 35678 / DSM 2160 / CIP 103997 / JCM 8858 / NBRC 14720 / NCIMB 2260 / Gabara) (Halobacterium pharaonis).